The primary structure comprises 162 residues: NADH-quinone oxidoreductase subunit I (162 aa).

2 4Fe-4S ferredoxin-type domains span residues 52-82 (LRRY…IEAG) and 93-122 (TRYD…EGPN). Residues Cys62, Cys65, Cys68, Cys72, Cys102, Cys105, Cys108, and Cys112 each contribute to the [4Fe-4S] cluster site.

The protein belongs to the complex I 23 kDa subunit family. NDH-1 is composed of 14 different subunits. Subunits NuoA, H, J, K, L, M, N constitute the membrane sector of the complex. It depends on [4Fe-4S] cluster as a cofactor.

The protein resides in the cell inner membrane. The catalysed reaction is a quinone + NADH + 5 H(+)(in) = a quinol + NAD(+) + 4 H(+)(out). Its function is as follows. NDH-1 shuttles electrons from NADH, via FMN and iron-sulfur (Fe-S) centers, to quinones in the respiratory chain. The immediate electron acceptor for the enzyme in this species is believed to be ubiquinone. Couples the redox reaction to proton translocation (for every two electrons transferred, four hydrogen ions are translocated across the cytoplasmic membrane), and thus conserves the redox energy in a proton gradient. The polypeptide is NADH-quinone oxidoreductase subunit I (Azorhizobium caulinodans (strain ATCC 43989 / DSM 5975 / JCM 20966 / LMG 6465 / NBRC 14845 / NCIMB 13405 / ORS 571)).